The chain runs to 218 residues: DNA replication complex GINS protein psf3 (218 aa).

A compositionally biased stretch (gly residues) spans 147-163; sequence GGGSSYHGRDGGGAGGK. Positions 147–182 are disordered; the sequence is GGGSSYHGRDGGGAGGKGKGKATKDDNASNLGVGGA.

This sequence belongs to the GINS3/PSF3 family. In terms of assembly, component of the GINS complex which is a heterotetramer of div-26/sld5, drc-1/psf1, drc-2/psf2 and drc-3/psf3.

Its subcellular location is the nucleus. In terms of biological role, the GINS complex plays an essential role in the initiation of DNA replication. This chain is DNA replication complex GINS protein psf3 (drc-3), found in Neurospora crassa (strain ATCC 24698 / 74-OR23-1A / CBS 708.71 / DSM 1257 / FGSC 987).